We begin with the raw amino-acid sequence, 491 residues long: Ribonuclease G (491 aa).

Residues 40–129 (GNIYKGRVTR…LTTDITLPSR (90 aa)) enclose the S1 motif domain. Mg(2+)-binding residues include Asp305 and Asp348.

Belongs to the RNase E/G family. RNase G subfamily. In terms of assembly, homodimer, in equilibrium with possible higher multimers. Requires Mg(2+) as cofactor.

Its subcellular location is the cytoplasm. Functionally, an endonuclease that acts in the processing of the 5'-end of 16S rRNA and 23S rRNA. It prefers 5'-monophosphorylated substrates and cleaves single-stranded sites rich in A and U residues; contributes to tRNA processing and mRNA turnover. The sequence is that of Ribonuclease G (rng) from Haemophilus influenzae (strain ATCC 51907 / DSM 11121 / KW20 / Rd).